The sequence spans 233 residues: Peptidyl-tRNA hydrolase (233 aa).

A tRNA-binding site is contributed by tyrosine 14. The active-site Proton acceptor is histidine 19. Residues phenylalanine 64, asparagine 66, and asparagine 112 each coordinate tRNA. The tract at residues 187 to 233 is disordered; that stretch reads VSPRRSGTGQKGKDKPPAPAKQQATATKAEPEPDTRSALQKLMERFK.

It belongs to the PTH family. As to quaternary structure, monomer.

The protein localises to the cytoplasm. It carries out the reaction an N-acyl-L-alpha-aminoacyl-tRNA + H2O = an N-acyl-L-amino acid + a tRNA + H(+). Functionally, hydrolyzes ribosome-free peptidyl-tRNAs (with 1 or more amino acids incorporated), which drop off the ribosome during protein synthesis, or as a result of ribosome stalling. Catalyzes the release of premature peptidyl moieties from peptidyl-tRNA molecules trapped in stalled 50S ribosomal subunits, and thus maintains levels of free tRNAs and 50S ribosomes. This is Peptidyl-tRNA hydrolase from Roseobacter denitrificans (strain ATCC 33942 / OCh 114) (Erythrobacter sp. (strain OCh 114)).